The chain runs to 192 residues: Protein FAM210B, mitochondrial (192 aa).

The transit peptide at 1-58 directs the protein to the mitochondrion; sequence MAGLLALLGPAGRVGARVRPRATWLLGATAPCAPPPLALALLPPRLDARLLRTARGDC. A disordered region spans residues 57–80; sequence DCRGHQDPSQATGTTGSSVSCTEE. A compositionally biased stretch (polar residues) spans 63-77; it reads DPSQATGTTGSSVSC. One can recognise a DUF1279 domain in the interval 80-191; that stretch reads EKKQSKSQQL…VGFFKPPAAK (112 aa). 2 helical membrane-spanning segments follow: residues 99–119 and 150–170; these read VGVS…YMVV and FVVA…ITLV.

It belongs to the FAM210 family. Expressed in late erythroblast differentiation stages. Underexpressed in ovarian cancer epithelia cells compared with normal human ovarian surface epithelia.

The protein localises to the mitochondrion. The protein resides in the mitochondrion outer membrane. Its function is as follows. Plays a role in erythroid differentiation. Involved in cell proliferation and tumor cell growth suppression. Involved in the metabolic reprogramming of cancer cells in a PDK4-dependent manner. This is Protein FAM210B, mitochondrial from Homo sapiens (Human).